Here is a 235-residue protein sequence, read N- to C-terminus: Large ribosomal subunit protein uL1 (235 aa).

This sequence belongs to the universal ribosomal protein uL1 family. In terms of assembly, part of the 50S ribosomal subunit.

In terms of biological role, binds directly to 23S rRNA. The L1 stalk is quite mobile in the ribosome, and is involved in E site tRNA release. Functionally, protein L1 is also a translational repressor protein, it controls the translation of the L11 operon by binding to its mRNA. The polypeptide is Large ribosomal subunit protein uL1 (Prochlorococcus marinus subsp. pastoris (strain CCMP1986 / NIES-2087 / MED4)).